Reading from the N-terminus, the 840-residue chain is Urease (840 aa).

The 439-residue stretch at 402–840 (GAIDCHVHYI…VPLSRNYFLF (439 aa)) folds into the Urease domain. His407, His409, and Lys490 together coordinate Ni(2+). Lys490 carries the post-translational modification N6-carboxylysine. His492 is a substrate binding site. Residues His519 and His545 each coordinate Ni(2+). The Proton donor role is filled by His593. Asp633 is a binding site for Ni(2+).

It in the C-terminal section; belongs to the metallo-dependent hydrolases superfamily. Urease alpha subunit family. As to quaternary structure, homohexamer. Other oligomeric forms may exist depending on pH and presence of salts. Ni cation serves as cofactor. Carboxylation allows a single lysine to coordinate two nickel ions.

The enzyme catalyses urea + 2 H2O + H(+) = hydrogencarbonate + 2 NH4(+). Its pathway is nitrogen metabolism; urea degradation; CO(2) and NH(3) from urea (urease route): step 1/1. Its activity is regulated as follows. P-hydroxymercuribenzoate irreversibly abolishes ureolytic activity, but does not inhibit the ability to activate platelets. Also inhibited by acetohydroxamic acid (AHA), a chelator of Ni2+ and Zn2+ ions. Functionally, urea hydrolase involved in nitrogen recycling from ureide, purine, and arginine catabolism. Is known to be highly toxic and lethal when given by intravenous route, producing convulsions and other signs of central nervous system intoxication associated with the high levels of ammonia formed in the blood of mice and rabbits. Is neurotoxic in mammals, when directly injected into hippocampus. It may induce seizures by acting at a neuronal network level, thereby disturbing electroencephalographic rhythms and causing metabolic alterations in key areas related to epileptogenesis and to neurogenic pulmonary edema. It increases calcium influx and neuronal firing rate in the hippocampus. Is able to insert itself into lipid bilayers, altering physicochemical properties of artificial membranes, and forming cation-selective ion channels. In vitro, has the ability to induce platelet aggregation, platelet granules secretion and release of ATP. In contrast to canatoxin, another urease from C.ensiformis, is not lethal to mice when intraperitoneally injected. This is Urease from Canavalia ensiformis (Jack bean).